A 266-amino-acid polypeptide reads, in one-letter code: Phosphatidate cytidylyltransferase (266 aa).

The next 8 helical transmembrane spans lie at 16 to 36 (FVLI…LFWA), 52 to 72 (LFQV…WVAA), 78 to 98 (PIEC…YQKA), 101 to 121 (SEAI…FGVY), 125 to 145 (GAVA…GAFF), 164 to 184 (LEGA…VGMG), 186 to 206 (LSGG…VAVF), and 237 to 257 (LDSM…LEIW).

The protein belongs to the CDS family.

The protein localises to the cell inner membrane. It carries out the reaction a 1,2-diacyl-sn-glycero-3-phosphate + CTP + H(+) = a CDP-1,2-diacyl-sn-glycerol + diphosphate. It functions in the pathway phospholipid metabolism; CDP-diacylglycerol biosynthesis; CDP-diacylglycerol from sn-glycerol 3-phosphate: step 3/3. This Helicobacter pylori (strain ATCC 700392 / 26695) (Campylobacter pylori) protein is Phosphatidate cytidylyltransferase (cdsA).